The sequence spans 525 residues: GMP synthase [glutamine-hydrolyzing] (525 aa).

The Glutamine amidotransferase type-1 domain maps to 9–207; it reads RILILDFGSQ…VRDICECEAL (199 aa). Residue C86 is the Nucleophile of the active site. Residues H181 and E183 contribute to the active site. Residues 208–400 enclose the GMPS ATP-PPase domain; the sequence is WTPAKIIDDA…LGLPYDMLYR (193 aa). Residue 235–241 coordinates ATP; it reads SGGVDSS.

As to quaternary structure, homodimer.

It carries out the reaction XMP + L-glutamine + ATP + H2O = GMP + L-glutamate + AMP + diphosphate + 2 H(+). Its pathway is purine metabolism; GMP biosynthesis; GMP from XMP (L-Gln route): step 1/1. Its function is as follows. Catalyzes the synthesis of GMP from XMP. In Cronobacter sakazakii (strain ATCC BAA-894) (Enterobacter sakazakii), this protein is GMP synthase [glutamine-hydrolyzing].